Here is a 380-residue protein sequence, read N- to C-terminus: Cobalt-precorrin-5B C(1)-methyltransferase (380 aa).

The protein belongs to the CbiD family.

The enzyme catalyses Co-precorrin-5B + S-adenosyl-L-methionine = Co-precorrin-6A + S-adenosyl-L-homocysteine. It participates in cofactor biosynthesis; adenosylcobalamin biosynthesis; cob(II)yrinate a,c-diamide from sirohydrochlorin (anaerobic route): step 6/10. Functionally, catalyzes the methylation of C-1 in cobalt-precorrin-5B to form cobalt-precorrin-6A. In Salinispora arenicola (strain CNS-205), this protein is Cobalt-precorrin-5B C(1)-methyltransferase.